A 447-amino-acid polypeptide reads, in one-letter code: MFRWIAIGVLSVAVIGTAVWGYNEYSEKNEIKIQAENEYQRSFHELTYYMDLLNDEIGTALAMNSKERLSPQFVDIWRLTSQAHSNVGQLPLGLLPFHKTEQFLSDIGEFTYQTAVRNLDDNPLTEEETQKLKDYYDQSGQIKDELRQVQHVALEEGLNWMDVELALSDENAQQDNTIVNGFQTVEKSVEGFGQADPENSTISTNTQDHSYKNLTGSEVTENEALQRAMEIFEIKDKDLLSISKSGEGADTPLYSISYNKDEEHGYMDMAIKGGHPLNLLVSREMKEKKVSLNEGSEKAKDYLASFGLEDMTLFQSSEYDHIGVYSYLYNDNGVRVYSDAVEVKVGLDNGDLLGLTTNSYFMNHTDREIPEPKISEDEARDNVNSTVDIQESHLAIIDNNAGEEVLTYEFLGIMDDETYRIFINAENGQEELVEKLDGKEVNYNSVL.

It belongs to the YpeB family.

In terms of biological role, required for spore cortex hydrolysis during germination. Appears to be required for either expression, localization, activation or function of SleB. This is Sporulation protein YpeB from Oceanobacillus iheyensis (strain DSM 14371 / CIP 107618 / JCM 11309 / KCTC 3954 / HTE831).